A 257-amino-acid polypeptide reads, in one-letter code: uncharacterized protein (257 aa).

Disordered regions lie at residues 86–119 (SDEEGDNRPLPTPLVEEDNRPPTPLPEEDDRPLS) and 182–206 (STPLGTEESRPQAKPTPTSQLTDGQ). Over residues 196 to 206 (PTPTSQLTDGQ) the composition is skewed to polar residues.

This is an uncharacterized protein from Invertebrate iridescent virus 3 (IIV-3).